A 163-amino-acid polypeptide reads, in one-letter code: Large ribosomal subunit protein uL10 (163 aa).

The protein belongs to the universal ribosomal protein uL10 family. As to quaternary structure, part of the ribosomal stalk of the 50S ribosomal subunit. The N-terminus interacts with L11 and the large rRNA to form the base of the stalk. The C-terminus forms an elongated spine to which L12 dimers bind in a sequential fashion forming a multimeric L10(L12)X complex.

Forms part of the ribosomal stalk, playing a central role in the interaction of the ribosome with GTP-bound translation factors. The polypeptide is Large ribosomal subunit protein uL10 (Histophilus somni (strain 2336) (Haemophilus somnus)).